The primary structure comprises 198 residues: Dual specificity protein phosphatase 14 (198 aa).

The Tyrosine-protein phosphatase domain maps to 26–167; that stretch reads GIAQITSSLF…LIDYERQLFG (142 aa). Catalysis depends on cysteine 111, which acts as the Phosphocysteine intermediate.

The protein belongs to the protein-tyrosine phosphatase family. Non-receptor class dual specificity subfamily. In terms of assembly, interacts with CD28.

The catalysed reaction is O-phospho-L-tyrosyl-[protein] + H2O = L-tyrosyl-[protein] + phosphate. The enzyme catalyses O-phospho-L-seryl-[protein] + H2O = L-seryl-[protein] + phosphate. It carries out the reaction O-phospho-L-threonyl-[protein] + H2O = L-threonyl-[protein] + phosphate. In terms of biological role, involved in the inactivation of MAP kinases. Dephosphorylates ERK, JNK and p38 MAP-kinases. Plays a negative role in TCR signaling by dephosphorylating MAP3K7 adapter TAB1 leading to its inactivation. The protein is Dual specificity protein phosphatase 14 (DUSP14) of Bos taurus (Bovine).